We begin with the raw amino-acid sequence, 405 residues long: Cysteine desulfurase IscS (405 aa).

Pyridoxal 5'-phosphate is bound by residues 75-76 (AT), Asn156, Gln184, and 204-206 (SAH). Lys207 carries the post-translational modification N6-(pyridoxal phosphate)lysine. Residue Thr244 coordinates pyridoxal 5'-phosphate. Cys329 serves as the catalytic Cysteine persulfide intermediate. Residue Cys329 participates in [2Fe-2S] cluster binding.

The protein belongs to the class-V pyridoxal-phosphate-dependent aminotransferase family. NifS/IscS subfamily. As to quaternary structure, homodimer. Forms a heterotetramer with IscU, interacts with other sulfur acceptors. Pyridoxal 5'-phosphate is required as a cofactor.

The protein localises to the cytoplasm. The catalysed reaction is (sulfur carrier)-H + L-cysteine = (sulfur carrier)-SH + L-alanine. The protein operates within cofactor biosynthesis; iron-sulfur cluster biosynthesis. In terms of biological role, master enzyme that delivers sulfur to a number of partners involved in Fe-S cluster assembly, tRNA modification or cofactor biosynthesis. Catalyzes the removal of elemental sulfur atoms from cysteine to produce alanine. Functions as a sulfur delivery protein for Fe-S cluster synthesis onto IscU, an Fe-S scaffold assembly protein, as well as other S acceptor proteins. This chain is Cysteine desulfurase IscS, found in Methylobacillus flagellatus (strain ATCC 51484 / DSM 6875 / VKM B-1610 / KT).